The following is a 2531-amino-acid chain: MNIDKDVSALLCTAKKYVTQKEFNRQKMKFLLDDITKLLSKSFVSRIEQLDENEFMEKIMILQSITFTLHLITEKQELSSEEKIRLFQSVIASMCAFEDEELAKCFDRILSVLMISVTKQDPRETIYFLQGLLEVVKYCDVEPSSSLPQLITPEIASAISLGASGFFRYHLKWNIISTLFGENAGECVHFDELVLFWPHCRSQLEDKLKNDCSMTENCLRAGLTILKYKKLHNSILDQALFIDELFATFNSLTAKKSTNHMTFPKLLNEIQHFLQDHGKVLIMHKELRQKPVQWLIIYLELIDDANDKFGLLENFSLLLLDLSTNHDIHEFPARLCMTASEICMRRIKHSIQSTHTDCLADYLDILASLLKLARIQKLDIFQCFATEIEAHHSLNNPLWPRILRSLLSVQNPHCQQFCKKFVPSIDKLWITLLNGESSRATLNSLVIVTASCPFANNNDEGVKQIIPFLLIPCFQDFRDRVGSKWDNFRFIGLPKSEPSELINLERFTTVLERSTSESTKLRAVNCALQLEKKTGKYINLVAEMSLAVFSKSQTDRIANSFEPLILFLTDNLQLINDFITILIAKLCEKQEFYSELTILKYFKTLQKLFCLAANGRNSCKKCGEECFVDPDSKENVKIDYESLSGLIKGIVARRNTFSQELIREFLQTSRVMLLHVDSKGIASSFTSIIKALDIGFSENANAYFRVWELVCCRSEATVEKKLQMYIPLIGRSFALLGDDAALKVHGFLSNVLSARLSSTVKATLFASSFAHSVLKNCEIDWNVSYTWKTQFSQCLIKAPVGTCEEALQIMFKRYSTIFTRCFLNRLFFDASSAGAQKPSYDEHRIREITRCYLSHVLSDFNFPNQKITFNMIRPSLLYWSLLSSARGINSKLTLSVIDFICQEMSAASVSMSSISPNPSDIRIVMIQRKSLITETFAQLVQFLAFENNRNTTSFWKFCSDHCDFKDEDIRTVISSYRKQVFMHLLLVSAREFLNPRNPSMIVEQLRATYENIKKGEKFMISTAIETRNEGIEFLFIFRTYFTNDQYFLTREATAESFRILLQNMKQDFFDTNWYIILMTLRQIPLNLDSTQSSWISFIEQINYSILRSNIWRILTDISRIENNDILIEKVWNRLSYDMVIDKISTDAMIKRVFWLIPLEVEKRIDLKFEISKSRQIEDVLEFIRMFPQYPSVQFADNLASKIERKTVYKEELPKLIGSLSRILPQCHSKREQNKIIKILQKLPIICSDLPDHNFIRWDTRFKFFCEPRQLTQAVLEDCAGIVEVMTGTSKIEYVDRTMCEIYKFFNPNEASPEMKSTLDGIKNMYAKMICSQKPEPSMIEQKTIDELSLGGSRRESFSRWLTVIILKCAEMSEDAPLSSLASIAHVDDTRFLSKLAMRFILTVIHMERDSVTQWILSTFEEALTNTNHRRLTNSDRGPASFVFYVFDFIYSYSSSEELRKKKKIWEKVISFWKSMMSWTFKDENGHGQPLIVKVAETFGMEKRCILWLEMFMEQKRKTSTEIESETEAAYYFTLMNLYGRIHELNGVRGAYARLSRIQIDHVYGKISMREAFGDFNSAACFARMTGKGKPFNSTEAIQKLIDELNCLEYSQIERNEQEDYLNSLKTLSQWVNIDNDIGPSPHIFSRNIEYWATESTILKMIRNDERDEIVNNAIENAKSKVIERLSECAIGGSCSYEIATPFLVELQKLNEIVELKNVSNDELSAFNSDFWKNIQKRTDDSEQKISILEPILRVRRSMLDIRMQSMTGRDKENIRSRIVEVHLQSARIARLTGCFERAQLSLINAKKVLPFENKIVLEEAKLQLQTSDELNGMSLLDSIISKNFGDLHTIYTDTQQSVNLDVQKSAKLKIEHYQEETKNLFSSVQMLRISHMIKAGNTIGFDKVYHETTQLLQCFAHSGVMYEAAWLLDYLSNYKERSKHVLPLLKAYKEVAKYEKNQVLQARAVERMTSLWLSNTRKISTHISSVPKLPEGQISDLRQNIKSMNREIQTALEHIGWRAFYPAYAVLARHIDHQDEEVTRTIKQIMKQLILRMPHQCMWQSAYLLRQNIASVKEKYMEVLTEVKRKAPCYVTLIDQYDYASGVFNTVSGKVESDDCKLSEKVDGLKTMFRDKKYDPKELVMNRRVDCDCKILSGIMVPVRSVIDESVHDTEIRDDGFEESCHLPDRYLIHDFSDKVKVLHSNTKPVIIKLTTKTGRIVRLICKKDDDLSKDYHFTKMVEMCNDLLMKDEQTRIQKMTATTYSVIPLGKQGGIIEFMEGVTSFYETLDKLMGMTSGEWLEKLKFWNTHMKPMGKEERTKYFREVACKNTPVVMGKWFRIQYPEAGQWFASRKLFAKSTAVMSVIGYIFGLGDRHTKNLMVHTTGKCIHVDFDMIFNKGETLGTPELVPFRLTQNMINGMGEVALDGEFRTVCEQALRVFRENSYEIEKYIADLPNLVADFPSNKRAPKDFDMSEAKRLVSGRLRGQIMTAKLYRSNPISHPMQVSQLASSLIELATSEEKLSEMYLGWMATL.

An FAT domain is found at 1490–2067 (LIVKVAETFG…MWQSAYLLRQ (578 aa)). The 321-residue stretch at 2192-2512 (FSDKVKVLHS…VSQLASSLIE (321 aa)) folds into the PI3K/PI4K catalytic domain. Residues 2198-2204 (VLHSNTK) are G-loop. Residues 2368–2376 (GLGDRHTKN) are catalytic loop. The interval 2387-2411 (HVDFDMIFNKGETLGTPELVPFRLT) is activation loop. The 33-residue stretch at 2499 to 2531 (HPMQVSQLASSLIELATSEEKLSEMYLGWMATL) folds into the FATC domain.

The protein belongs to the PI3/PI4-kinase family. ATM subfamily. The cofactor is Mn(2+).

It is found in the nucleus. The catalysed reaction is L-seryl-[protein] + ATP = O-phospho-L-seryl-[protein] + ADP + H(+). It carries out the reaction L-threonyl-[protein] + ATP = O-phospho-L-threonyl-[protein] + ADP + H(+). In terms of biological role, serine/threonine protein kinase which activates checkpoint signaling upon genotoxic stresses such as ionizing radiation (IR), ultraviolet light (UV), or DNA replication stalling, thereby acting as a DNA damage sensor. Recognizes the substrate consensus sequence [ST]-Q. Phosphorylates various proteins, which collectively inhibits DNA replication and mitosis and promotes DNA repair and recombination. Prevents mitotic catastrophe by functioning in the S-phase checkpoint and cooperating with atm-1 in the checkpoint response to double-strand breaks (DSBs) after ionizing radiation (IR) to induce cell cycle arrest or apoptosis via the cep-1/p53 pathway. In response to ionizing radiation, probably required for the association between the brc-1-brd-1 heterodimer and rad-51 and let-70 in order to activate E3-ubiquitin ligase activity of the heterodimer and induce ubiquitination at DNA damage sites. The chain is Serine/threonine-protein kinase ATR from Caenorhabditis elegans.